The sequence spans 335 residues: Cytoskeleton protein RodZ (335 aa).

The Cytoplasmic segment spans residues 1-111 (MNTEATHDQN…LGKRRKKRDG (111 aa)). In terms of domain architecture, HTH cro/C1-type spans 19 to 71 (LRNAREQLGLSQQAVAERLCLKVSTVRDIEEDKAPADLASTFLRGYIRSYARL). Residues 30 to 49 (QQAVAERLCLKVSTVRDIEE) constitute a DNA-binding region (H-T-H motif). A helical; Signal-anchor for type II membrane protein transmembrane segment spans residues 112-132 (WLMTFTWLVLFVVIGLSGAWW). The Periplasmic segment spans residues 133 to 335 (WQDHKAQQEE…TLNAEQSPAQ (203 aa)). The segment covering 148–164 (DQSSAELNNNQSQSVPL) has biased composition (polar residues). The segment at 148–244 (DQSSAELNNN…PLPTDQAGVT (97 aa)) is disordered. 2 stretches are compositionally biased toward low complexity: residues 165 to 205 (DTST…DPQQ) and 217 to 239 (DTAA…LPTD).

It belongs to the RodZ family.

The protein resides in the cell inner membrane. Cytoskeletal protein that is involved in cell-shape control through regulation of the length of the long axis. In Escherichia coli O127:H6 (strain E2348/69 / EPEC), this protein is Cytoskeleton protein RodZ.